The following is a 311-amino-acid chain: Giardin subunit alpha-8 (311 aa).

Annexin repeat units follow at residues 5–73 (RKAY…IRCW), 75–146 (NRHE…DRWM), 154–223 (NNVK…AAHY), and 227–295 (EPSK…SLWR).

This sequence belongs to the annexin family. Giardin subunit alpha subfamily.

It is found in the cytoplasm. It localises to the cytoskeleton. In terms of biological role, giardins are involved in parasite attachment to the intestinal mucosa and in the cytoskeletal disassembly and reassembly that marks the transition from infectious trophozoite to transmissible cyst. They may interact with other cytoskeletal proteins such as microtubules in the microribbons or crossbridges, to maintain the integrity of the ventral disk. This is Giardin subunit alpha-8 from Giardia intestinalis (Giardia lamblia).